We begin with the raw amino-acid sequence, 1059 residues long: Carbamoyl phosphate synthase large chain (1059 aa).

The interval 1–401 (MPKRSDIKKI…SLLKACRSLE (401 aa)) is carboxyphosphate synthetic domain. Residues arginine 129, arginine 169, glycine 175, glycine 176, arginine 208, isoleucine 210, glutamate 215, glycine 241, isoleucine 242, histidine 243, glutamine 284, and glutamate 298 each coordinate ATP. Residues 133–327 (KQLMEELEQP…IAKLAAKIAV (195 aa)) form the ATP-grasp 1 domain. 3 residues coordinate Mg(2+): glutamine 284, glutamate 298, and asparagine 300. Mn(2+) contacts are provided by glutamine 284, glutamate 298, and asparagine 300. The segment at 402–546 (IGVYHNEMSE…YSTYEWENES (145 aa)) is oligomerization domain. Residues 547 to 929 (IKSDKESVIV…ALYKAFEASY (383 aa)) are carbamoyl phosphate synthetic domain. An ATP-grasp 2 domain is found at 671–861 (EQALKDLDIP…MAQVATNLIL (191 aa)). The ATP site is built by arginine 707, serine 746, isoleucine 748, glutamate 752, glycine 777, valine 778, histidine 779, serine 780, glutamine 820, and glutamate 832. Mg(2+) contacts are provided by glutamine 820, glutamate 832, and asparagine 834. Mn(2+)-binding residues include glutamine 820, glutamate 832, and asparagine 834. Residues 930–1059 (LHLPTFGNVI…ESRSFTTEAI (130 aa)) enclose the MGS-like domain. The allosteric domain stretch occupies residues 930 to 1059 (LHLPTFGNVI…ESRSFTTEAI (130 aa)).

The protein belongs to the CarB family. In terms of assembly, composed of two chains; the small (or glutamine) chain promotes the hydrolysis of glutamine to ammonia, which is used by the large (or ammonia) chain to synthesize carbamoyl phosphate. Tetramer of heterodimers (alpha,beta)4. Requires Mg(2+) as cofactor. Mn(2+) serves as cofactor.

It carries out the reaction hydrogencarbonate + L-glutamine + 2 ATP + H2O = carbamoyl phosphate + L-glutamate + 2 ADP + phosphate + 2 H(+). It catalyses the reaction hydrogencarbonate + NH4(+) + 2 ATP = carbamoyl phosphate + 2 ADP + phosphate + 2 H(+). It functions in the pathway amino-acid biosynthesis; L-arginine biosynthesis; carbamoyl phosphate from bicarbonate: step 1/1. Its pathway is pyrimidine metabolism; UMP biosynthesis via de novo pathway; (S)-dihydroorotate from bicarbonate: step 1/3. Functionally, large subunit of the glutamine-dependent carbamoyl phosphate synthetase (CPSase). CPSase catalyzes the formation of carbamoyl phosphate from the ammonia moiety of glutamine, carbonate, and phosphate donated by ATP, constituting the first step of 2 biosynthetic pathways, one leading to arginine and/or urea and the other to pyrimidine nucleotides. The large subunit (synthetase) binds the substrates ammonia (free or transferred from glutamine from the small subunit), hydrogencarbonate and ATP and carries out an ATP-coupled ligase reaction, activating hydrogencarbonate by forming carboxy phosphate which reacts with ammonia to form carbamoyl phosphate. This is Carbamoyl phosphate synthase large chain from Streptococcus thermophilus (strain ATCC BAA-250 / LMG 18311).